Reading from the N-terminus, the 202-residue chain is Na(+)-translocating NADH-quinone reductase subunit E (202 aa).

A run of 6 helical transmembrane segments spans residues 11–31 (SIFM…FLAV), 41–61 (LGVA…IIYF), 81–101 (FLGF…LEMV), 114–134 (GIYL…LFMV), 144–164 (LVYG…LAGI), and 180–200 (LGIT…FSGI).

Belongs to the NqrDE/RnfAE family. Composed of six subunits; NqrA, NqrB, NqrC, NqrD, NqrE and NqrF.

The protein resides in the cell inner membrane. It catalyses the reaction a ubiquinone + n Na(+)(in) + NADH + H(+) = a ubiquinol + n Na(+)(out) + NAD(+). In terms of biological role, NQR complex catalyzes the reduction of ubiquinone-1 to ubiquinol by two successive reactions, coupled with the transport of Na(+) ions from the cytoplasm to the periplasm. NqrA to NqrE are probably involved in the second step, the conversion of ubisemiquinone to ubiquinol. In Psychromonas ingrahamii (strain DSM 17664 / CCUG 51855 / 37), this protein is Na(+)-translocating NADH-quinone reductase subunit E.